Reading from the N-terminus, the 467-residue chain is Zinc finger protein 410 (467 aa).

Disordered regions lie at residues 84-111 and 187-214; these read PDGE…SLLQ and NAKT…PLPQ. 5 consecutive C2H2-type zinc fingers follow at residues 219–243, 249–273, 279–303, 309–333, and 339–362; these read LKCT…LKTH, FICP…MRTH, FVCP…LRIH, FLCE…LVVH, and HQCQ…RKHH. Positions 221, 226, 239, 243, 251, 256, 269, 273, 281, 286, 299, 303, 311, 316, 329, 333, 341, 344, 357, and 361 each coordinate Zn(2+).

As to quaternary structure, interacts with CDKN2A/p14ARF. In terms of processing, O-glycosylated. O-GlcNAcylation may occur in response to increasing glucose levels and affect transcription factor activity. Post-translationally, sumoylated. Sumoylation increases its half-life, possibly by blocking ubiquitin-mediated degradation.

It localises to the nucleus. The protein resides in the chromosome. In terms of biological role, transcription factor that binds to the sequence motif 5'-CATCCCATAATA-3', and is specifically required to silence expression of fetal hemoglobin in adult erythroid cells. Prevents expression of fetal hemoglobin genes HBG1 and HBG2 through CHD4: acts as a direct transcriptional activator of CHD4, a central component of the NuRD complex that represses transcription of fetal hemoglobin genes HBG1 and HBG2 in erythroid cells. May also activate transcription of matrix-remodeling genes such as MMP1 during fibroblast senescence. May activate transcription of the gap junction gene GJC1, perhaps in response to increasing glucose. However, recent studies suggest that ZNF410 is dedicated to regulate expression of a single gene: CHD4. The polypeptide is Zinc finger protein 410 (Bos taurus (Bovine)).